A 452-amino-acid polypeptide reads, in one-letter code: MALNKKLISLLLLIFIILNIVNSHQQEDCDDDDEDIGISAERSERRSVKNSNDGSNFYNLNDYYTPENWNYYSGSFATKDCRDASYITIPLGTTGGLDEGNLSSFLLTKKGSNLFIALDAGTVWQGVRRLTTFKYFNTLFNITYPSWAVLPEQRTSWFLKNHVMSYFIGHSHLDHVGGLILVSPEDYLAKNWIDVQPPINNGIMGLIRKLGFKPTDFTSSSILQKKTIMGLPSTINSISTNLFNNQVWPNLPSFGRYQYFSLASGIEYPFTELVPYNATTMSLVANEFPFSVKVKPFELCHDNLISTSFLFTDSISGEQIAFFSDTGVPSSVACDWEGKIYAVWKQIKIDKLKAIYIETSFPNNTPDSAMFGHLRPRDVMKLMDQLLVQSIQTSPPMTNLKHVKLIIEHIKPQVAEDPNGWTTQRVIYQQLKEANNNGVRIIIPNQGDPICI.

Residues 1-23 (MALNKKLISLLLLIFIILNIVNS) form the signal peptide. The propeptide occupies 24–49 (HQQEDCDDDDEDIGISAERSERRSVK). 3 N-linked (GlcNAc...) asparagine glycosylation sites follow: asparagine 101, asparagine 141, and asparagine 277.

The protein belongs to the cyclic nucleotide phosphodiesterase class-II family.

The protein localises to the secreted. The protein resides in the extracellular space. It is found in the cell surface. The enzyme catalyses 3',5'-cyclic AMP + H2O = AMP + H(+). It carries out the reaction 3',5'-cyclic GMP + H2O = GMP + H(+). Inhibited by dithiotreitol (DTT). Its function is as follows. Phosphodiesterase which displays a preference for cAMP over cGMP. Involved in the degradation of extracellular cAMP. Maintains the responsiveness of cells to the chemoattractant cAMP during the aggregation phase of development. The sequence is that of cAMP/cGMP-dependent 3',5'-cAMP/cGMP phosphodiesterase A (pdsA) from Dictyostelium discoideum (Social amoeba).